The primary structure comprises 264 residues: MAVGKNKRLTKGGKKGAKKKIVDPFSKKDWYDVKAPAMFNIRNLGKTLVTRTQGTKIASDGLKGRVFEVSLADLQNDEVAFRKFKLITEDVQGKNCLTNFHGMDLTRDKMCSMVKKWQTMIEAHVDVKTTDGYLLRLFCVGFTKKRNNQIRKTSYAQHQQVRQIRKKMMEIMTREVQTNDLKEVVNKLIPDSIGKDIEKACQSIYPLHDVYVRKVKMLKKPKFELGKLMELHGEGGGAGKPAGDETGAKVERADGYEPPVQESV.

The interval 233–264 is disordered; the sequence is GEGGGAGKPAGDETGAKVERADGYEPPVQESV. Positions 242 to 255 are enriched in basic and acidic residues; sequence AGDETGAKVERADG.

It belongs to the eukaryotic ribosomal protein eS1 family. In terms of assembly, component of the small ribosomal subunit. Mature ribosomes consist of a small (40S) and a large (60S) subunit. The 40S subunit contains about 33 different proteins and 1 molecule of RNA (18S). The 60S subunit contains about 49 different proteins and 3 molecules of RNA (28S, 5.8S and 5S). Part of the small subunit (SSU) processome, composed of more than 70 proteins and the RNA chaperone small nucleolar RNA (snoRNA) U3.

It is found in the cytoplasm. It localises to the nucleus. The protein localises to the nucleolus. Functionally, component of the small ribosomal subunit. The ribosome is a large ribonucleoprotein complex responsible for the synthesis of proteins in the cell. Part of the small subunit (SSU) processome, first precursor of the small eukaryotic ribosomal subunit. During the assembly of the SSU processome in the nucleolus, many ribosome biogenesis factors, an RNA chaperone and ribosomal proteins associate with the nascent pre-rRNA and work in concert to generate RNA folding, modifications, rearrangements and cleavage as well as targeted degradation of pre-ribosomal RNA by the RNA exosome. May play a role during erythropoiesis. The polypeptide is Small ribosomal subunit protein eS1 (rps3a) (Xenopus tropicalis (Western clawed frog)).